The sequence spans 461 residues: GTPase Der (461 aa).

EngA-type G domains follow at residues 9-171 and 200-371; these read KTIA…NLNK and IQVG…ECFS. Residues 15 to 22, 62 to 66, 123 to 126, 206 to 213, 253 to 257, and 317 to 320 each bind GTP; these read GQPNVGKS, DTGGM, NKID, GRVNVGKS, DTAGI, and NKWD. The KH-like domain occupies 372-456; sequence KRIPTSLLNS…PLILNAKDKK (85 aa).

This sequence belongs to the TRAFAC class TrmE-Era-EngA-EngB-Septin-like GTPase superfamily. EngA (Der) GTPase family. Associates with the 50S ribosomal subunit.

Functionally, GTPase that plays an essential role in the late steps of ribosome biogenesis. In Helicobacter pylori (strain HPAG1), this protein is GTPase Der.